The chain runs to 392 residues: Histidinol-phosphate aminotransferase 2 (392 aa).

Lys228 is subject to N6-(pyridoxal phosphate)lysine.

Belongs to the class-II pyridoxal-phosphate-dependent aminotransferase family. Histidinol-phosphate aminotransferase subfamily. Homodimer. It depends on pyridoxal 5'-phosphate as a cofactor.

The enzyme catalyses L-histidinol phosphate + 2-oxoglutarate = 3-(imidazol-4-yl)-2-oxopropyl phosphate + L-glutamate. It functions in the pathway amino-acid biosynthesis; L-histidine biosynthesis; L-histidine from 5-phospho-alpha-D-ribose 1-diphosphate: step 7/9. The chain is Histidinol-phosphate aminotransferase 2 from Nitrosospira multiformis (strain ATCC 25196 / NCIMB 11849 / C 71).